The sequence spans 1673 residues: Protein TIC 214 (1673 aa).

6 helical membrane-spanning segments follow: residues 32–52, 70–90, 93–113, 130–150, 170–190, and 218–238; these read AGLY…ILLI, LILG…YIAF, PYTL…GNNL, LEIL…TCIF, MVFL…VLMC, and FFLV…IQSL. Composition is skewed to basic and acidic residues over residues 264-276 and 283-298; these read LKKS…GKST and SHEK…SKLE. 4 disordered regions span residues 264–302, 547–611, 1120–1146, and 1370–1433; these read LKKS…NEDE, VVFD…YSIR, NKQS…TDNL, and QQNQ…SEDD. Positions 562 to 586 are enriched in polar residues; sequence DNGNIQNNSSDKTINPQNNLTNLKP. The segment covering 597–611 has biased composition (basic and acidic residues); the sequence is TTEKEPKDDKSYSIR. A compositionally biased stretch (polar residues) spans 1120–1135; that stretch reads NKQSLQKRNSSGNSNL. Low complexity predominate over residues 1370-1379; the sequence is QQNQTTTKMN. Basic and acidic residues-rich tracts occupy residues 1380 to 1399 and 1406 to 1423; these read TETK…KKTE and TKNK…KETE.

This sequence belongs to the TIC214 family. Part of the Tic complex.

It is found in the plastid. The protein resides in the chloroplast inner membrane. Its function is as follows. Involved in protein precursor import into chloroplasts. May be part of an intermediate translocation complex acting as a protein-conducting channel at the inner envelope. The polypeptide is Protein TIC 214 (Cuscuta gronovii (Common dodder)).